Here is a 911-residue protein sequence, read N- to C-terminus: Protein translocase subunit SecA (911 aa).

Residues glutamine 86, glycine 104–threonine 108, and aspartate 494 each bind ATP. The interval valine 856 to glycine 911 is disordered. Over residues aspartate 876–glycine 889 the composition is skewed to polar residues. The span at arginine 902–glycine 911 shows a compositional bias: basic and acidic residues.

Belongs to the SecA family. In terms of assembly, monomer and homodimer. Part of the essential Sec protein translocation apparatus which comprises SecA, SecYEG and auxiliary proteins SecDF. Other proteins may also be involved.

The protein localises to the cell membrane. Its subcellular location is the cytoplasm. It catalyses the reaction ATP + H2O + cellular proteinSide 1 = ADP + phosphate + cellular proteinSide 2.. Part of the Sec protein translocase complex. Interacts with the SecYEG preprotein conducting channel. Has a central role in coupling the hydrolysis of ATP to the transfer of proteins into and across the cell membrane, serving as an ATP-driven molecular motor driving the stepwise translocation of polypeptide chains across the membrane. This chain is Protein translocase subunit SecA, found in Micrococcus luteus (strain ATCC 4698 / DSM 20030 / JCM 1464 / CCM 169 / CCUG 5858 / IAM 1056 / NBRC 3333 / NCIMB 9278 / NCTC 2665 / VKM Ac-2230) (Micrococcus lysodeikticus).